We begin with the raw amino-acid sequence, 216 residues long: Cell envelope integrity protein Cei (216 aa).

Residues 25 to 45 (PAIVVVAFLVVVTCVMWTLAL) form a helical membrane-spanning segment.

The protein localises to the cell membrane. Functionally, contributes to cell envelope integrity and virulence. The chain is Cell envelope integrity protein Cei from Mycobacterium tuberculosis (strain ATCC 25618 / H37Rv).